We begin with the raw amino-acid sequence, 354 residues long: Guanine nucleotide-binding protein alpha-3 subunit (354 aa).

A lipid anchor (N-myristoyl glycine) is attached at G2. The S-palmitoyl cysteine moiety is linked to residue C4. The G-alpha domain maps to 33–354 (KECKILLLGS…TNALKDSGIL (322 aa)). The segment at 36-49 (KILLLGSGESGKST) is G1 motif. Residues 41-48 (GSGESGKS), 177-183 (LRARSKT), 202-206 (DVGGQ), 271-274 (NKID), and A326 contribute to the GTP site. Residues S48 and T183 each coordinate Mg(2+). The interval 175–183 (DVLRARSKT) is G2 motif. The segment at 198–207 (IHLFDVGGQR) is G3 motif. A G4 motif region spans residues 267–274 (ILFLNKID). The G5 motif stretch occupies residues 324-329 (TQATDT).

The protein belongs to the G-alpha family. As to quaternary structure, g proteins are composed of 3 units; alpha, beta and gamma. The alpha chain contains the guanine nucleotide binding site.

Guanine nucleotide-binding proteins (G proteins) are involved as modulators or transducers in various transmembrane signaling systems. This subunit is involved in cAMP regulation and morphogenesis. It is essential for dimorphic switching in haploid cells. This is Guanine nucleotide-binding protein alpha-3 subunit (FIL1) from Ustilago hordei (Barley covered smut fungus).